Reading from the N-terminus, the 343-residue chain is Phosphate acyltransferase (343 aa).

This sequence belongs to the PlsX family. As to quaternary structure, homodimer. Probably interacts with PlsY.

It localises to the cytoplasm. The enzyme catalyses a fatty acyl-[ACP] + phosphate = an acyl phosphate + holo-[ACP]. It functions in the pathway lipid metabolism; phospholipid metabolism. Functionally, catalyzes the reversible formation of acyl-phosphate (acyl-PO(4)) from acyl-[acyl-carrier-protein] (acyl-ACP). This enzyme utilizes acyl-ACP as fatty acyl donor, but not acyl-CoA. This chain is Phosphate acyltransferase, found in Limosilactobacillus reuteri (strain DSM 20016) (Lactobacillus reuteri).